Consider the following 206-residue polypeptide: dTTP/UTP pyrophosphatase (206 aa).

Residue Asp-79 is the Proton acceptor of the active site.

It belongs to the Maf family. YhdE subfamily. It depends on a divalent metal cation as a cofactor.

The protein localises to the cytoplasm. It catalyses the reaction dTTP + H2O = dTMP + diphosphate + H(+). It carries out the reaction UTP + H2O = UMP + diphosphate + H(+). Functionally, nucleoside triphosphate pyrophosphatase that hydrolyzes dTTP and UTP. May have a dual role in cell division arrest and in preventing the incorporation of modified nucleotides into cellular nucleic acids. The polypeptide is dTTP/UTP pyrophosphatase (Rhizobium etli (strain ATCC 51251 / DSM 11541 / JCM 21823 / NBRC 15573 / CFN 42)).